The following is a 66-amino-acid chain: UPF0337 protein SAG0606 (66 aa).

A compositionally biased stretch (basic and acidic residues) spans 1–10 (MSQEKLKSKV). The segment at 1 to 23 (MSQEKLKSKVEQASGSLKEGAGK) is disordered.

Belongs to the UPF0337 (CsbD) family.

The polypeptide is UPF0337 protein SAG0606 (Streptococcus agalactiae serotype V (strain ATCC BAA-611 / 2603 V/R)).